Consider the following 508-residue polypeptide: Photosystem II CP47 reaction center protein (508 aa).

The next 6 membrane-spanning stretches (helical) occupy residues 21–36 (SVHI…WAGS), 101–115 (IAFS…IWHW), 140–156 (GIHL…FGAF), 203–218 (IAAG…FHLS), 237–252 (VLSS…AFVV), and 457–472 (SFAL…HGAR).

It belongs to the PsbB/PsbC family. PsbB subfamily. PSII is composed of 1 copy each of membrane proteins PsbA, PsbB, PsbC, PsbD, PsbE, PsbF, PsbH, PsbI, PsbJ, PsbK, PsbL, PsbM, PsbT, PsbX, PsbY, PsbZ, Psb30/Ycf12, at least 3 peripheral proteins of the oxygen-evolving complex and a large number of cofactors. It forms dimeric complexes. It depends on Binds multiple chlorophylls. PSII binds additional chlorophylls, carotenoids and specific lipids. as a cofactor.

The protein resides in the plastid membrane. Functionally, one of the components of the core complex of photosystem II (PSII). It binds chlorophyll and helps catalyze the primary light-induced photochemical processes of PSII. PSII is a light-driven water:plastoquinone oxidoreductase, using light energy to abstract electrons from H(2)O, generating O(2) and a proton gradient subsequently used for ATP formation. The polypeptide is Photosystem II CP47 reaction center protein (Cuscuta reflexa (Southern Asian dodder)).